The sequence spans 634 residues: tRNA uridine 5-carboxymethylaminomethyl modification enzyme MnmG (634 aa).

14-19 contacts FAD; that stretch reads GGGHAG. Residue 279-293 participates in NAD(+) binding; sequence GPRYCPSIEDKVVRF.

Belongs to the MnmG family. As to quaternary structure, homodimer. Heterotetramer of two MnmE and two MnmG subunits. FAD serves as cofactor.

The protein resides in the cytoplasm. Functionally, NAD-binding protein involved in the addition of a carboxymethylaminomethyl (cmnm) group at the wobble position (U34) of certain tRNAs, forming tRNA-cmnm(5)s(2)U34. The protein is tRNA uridine 5-carboxymethylaminomethyl modification enzyme MnmG of Xanthomonas oryzae pv. oryzae (strain KACC10331 / KXO85).